Here is a 255-residue protein sequence, read N- to C-terminus: Thiazole synthase (255 aa).

Catalysis depends on K96, which acts as the Schiff-base intermediate with DXP. Residues G157, 183–184, and 205–206 each bind 1-deoxy-D-xylulose 5-phosphate; these read AG and NT.

It belongs to the ThiG family. As to quaternary structure, homotetramer. Forms heterodimers with either ThiH or ThiS.

It is found in the cytoplasm. It carries out the reaction [ThiS sulfur-carrier protein]-C-terminal-Gly-aminoethanethioate + 2-iminoacetate + 1-deoxy-D-xylulose 5-phosphate = [ThiS sulfur-carrier protein]-C-terminal Gly-Gly + 2-[(2R,5Z)-2-carboxy-4-methylthiazol-5(2H)-ylidene]ethyl phosphate + 2 H2O + H(+). It participates in cofactor biosynthesis; thiamine diphosphate biosynthesis. Its function is as follows. Catalyzes the rearrangement of 1-deoxy-D-xylulose 5-phosphate (DXP) to produce the thiazole phosphate moiety of thiamine. Sulfur is provided by the thiocarboxylate moiety of the carrier protein ThiS. In vitro, sulfur can be provided by H(2)S. This chain is Thiazole synthase, found in Staphylococcus saprophyticus subsp. saprophyticus (strain ATCC 15305 / DSM 20229 / NCIMB 8711 / NCTC 7292 / S-41).